Consider the following 319-residue polypeptide: uncharacterized protein (319 aa).

Residues 21-70 (ETETLKNSTDEVQTSSSFSSSGGRQSSPLTSGSKLEREKQTPSLEQGDTQ) form a disordered region. Polar residues predominate over residues 25-34 (LKNSTDEVQT). Low complexity predominate over residues 35 to 51 (SSSFSSSGGRQSSPLTS). Residues 61–70 (TPSLEQGDTQ) are compositionally biased toward polar residues.

This is an uncharacterized protein from Homo sapiens (Human).